Here is an 803-residue protein sequence, read N- to C-terminus: Ribonuclease II, chloroplastic/mitochondrial (803 aa).

The transit peptide at 1–35 (MMSVRAINGCSIIRTATSAGGPPVSLFRHRIQRLR) directs the protein to the chloroplast and mitochondrion. One can recognise an RNB domain in the interval 399-694 (RIDLTHLKVY…AHYQIKAFLR (296 aa)).

This sequence belongs to the RNR ribonuclease family. In terms of tissue distribution, expressed in seedlings, roots, leaves and flowers.

It localises to the mitochondrion. The protein resides in the plastid. The protein localises to the chloroplast. It carries out the reaction Exonucleolytic cleavage in the 3'- to 5'-direction to yield nucleoside 5'-phosphates.. In terms of biological role, 3'-5' exoribonuclease that catalyzes 3' maturation of chloroplast and mitochondrion ribosomal RNAs; degrades short nucleotidic extensions to generate the mature 3'-ends. Involved in the maturation of 23S, 16S and 5S rRNAs. The polypeptide is Ribonuclease II, chloroplastic/mitochondrial (RNR1) (Arabidopsis thaliana (Mouse-ear cress)).